A 137-amino-acid polypeptide reads, in one-letter code: MLVPKRVKFRRVHRGHMRGEAKGGKTVTFGDFGLQATTSSWITNRQIEAARIAMTRYMKRGGKVWIKIFPHKSYTSKGVGVRMGNGKGAPEGWVEPVKRGKVMFEVAGVPEATAREALRLAQHKLPVRTKIIAREAE.

It belongs to the universal ribosomal protein uL16 family. Part of the 50S ribosomal subunit.

Its function is as follows. Binds 23S rRNA and is also seen to make contacts with the A and possibly P site tRNAs. This chain is Large ribosomal subunit protein uL16, found in Leuconostoc mesenteroides subsp. mesenteroides (strain ATCC 8293 / DSM 20343 / BCRC 11652 / CCM 1803 / JCM 6124 / NCDO 523 / NBRC 100496 / NCIMB 8023 / NCTC 12954 / NRRL B-1118 / 37Y).